The chain runs to 466 residues: 3-isopropylmalate dehydratase large subunit (466 aa).

Cysteine 347, cysteine 407, and cysteine 410 together coordinate [4Fe-4S] cluster.

It belongs to the aconitase/IPM isomerase family. LeuC type 1 subfamily. As to quaternary structure, heterodimer of LeuC and LeuD. It depends on [4Fe-4S] cluster as a cofactor.

It catalyses the reaction (2R,3S)-3-isopropylmalate = (2S)-2-isopropylmalate. It participates in amino-acid biosynthesis; L-leucine biosynthesis; L-leucine from 3-methyl-2-oxobutanoate: step 2/4. In terms of biological role, catalyzes the isomerization between 2-isopropylmalate and 3-isopropylmalate, via the formation of 2-isopropylmaleate. This chain is 3-isopropylmalate dehydratase large subunit, found in Salmonella paratyphi A (strain ATCC 9150 / SARB42).